The sequence spans 339 residues: Ribonucleoside-diphosphate reductase subunit beta (339 aa).

Fe cation contacts are provided by D87 and H121. Residue Y125 is part of the active site. H215 contacts Fe cation.

This sequence belongs to the ribonucleoside diphosphate reductase small chain family. Tetramer of two alpha and two beta subunits. Fe cation is required as a cofactor.

It catalyses the reaction a 2'-deoxyribonucleoside 5'-diphosphate + [thioredoxin]-disulfide + H2O = a ribonucleoside 5'-diphosphate + [thioredoxin]-dithiol. Its function is as follows. Provides the precursors necessary for DNA synthesis. Catalyzes the biosynthesis of deoxyribonucleotides from the corresponding ribonucleotides. The polypeptide is Ribonucleoside-diphosphate reductase subunit beta (nrdF) (Mycoplasma pneumoniae (strain ATCC 29342 / M129 / Subtype 1) (Mycoplasmoides pneumoniae)).